A 559-amino-acid polypeptide reads, in one-letter code: Non-homologous end joining factor IFFO1 (559 aa).

The tract at residues 21–57 (GPLGDSLGGDHFAGGGDLPPAPLSPAGPAAYSPPGPG) is disordered. Over residues 39–57 (PPAPLSPAGPAAYSPPGPG) the composition is skewed to pro residues. An LMNA binding region spans residues 65-116 (ALRNDLGSNINVLKTLNLRFRCFLAKVHELERRNRLLEKQLQQALEEGKQGR). The 454-residue stretch at 73 to 526 (NINVLKTLNL…RLITQSGDRK (454 aa)) folds into the IF rod domain. Residues 85–117 (RCFLAKVHELERRNRLLEKQLQQALEEGKQGRR) are a coiled coil. Residues 158–187 (SPARSPAGPLAPSAASLSSSSTSTSTTYSS) form a disordered region. The stretch at 237–301 (EIRALYNVLA…LKVEQLKAEL (65 aa)) forms a coiled coil. The interval 360–394 (SMGGRKRERKAAVEEDTSLSESEGPRQPDGDEEES) is disordered. An XCCR4 binding. Required for localization to the double-strand breaks (DSBs) region spans residues 450–525 (EQEDSLEKVI…RRLITQSGDR (76 aa)). A coiled-coil region spans residues 455–501 (LEKVIKDTESLFKTREKEYQETIDQIELELATAKNDMNRHLHEYMEM). A disordered region spans residues 520–559 (TQSGDRKSPAFTAVPLSDPPPPPSEAEDSDRDVSSDSSMR). Residues 550 to 559 (RDVSSDSSMR) are compositionally biased toward basic and acidic residues.

The protein belongs to the intermediate filament family. In terms of assembly, forms a heterotetramer with XRCC4. The interaction with XRCC4 is direct, involves LIG4-free XRCC4 and leads to relocalization of IFFO1 at the double-strand break (DSB) sites. Interacts with LMNA; the interaction forms an interior nucleoskeleton and the recruitment to DNA double-strand breaks. Ubiquitously expressed.

The protein resides in the nucleus. The protein localises to the nucleoplasm. It localises to the nucleus inner membrane. Its subcellular location is the nucleus matrix. In terms of biological role, nuclear matrix protein involved in the immobilization of broken DNA ends and the suppression of chromosome translocation during DNA double-strand breaks (DSBs). Interacts with the nuclear lamina component LMNA, resulting in the formation of a nucleoskeleton that relocalizes to the DSB sites in a XRCC4-dependent manner and promotes the immobilization of the broken ends, thereby preventing chromosome translocation. Acts as a scaffold that allows the DNA repair protein XRCC4 and LMNA to assemble into a complex at the DSB sites. The chain is Non-homologous end joining factor IFFO1 from Homo sapiens (Human).